We begin with the raw amino-acid sequence, 318 residues long: MGKGAAKYGFKSGVFPTTRSILKSPTTKQTDIINKVKSPKPKGVLGIGYAKGVKHPKGSHRLSPKVNFIDVDNLIAKTVAEPQSIKSSNGSAQKVRLQKAELRRKFLIEAFRKEEARLLHKHEYLQKRTKELEKAKELELEKLNKEKSSDLTIMTLDKMMSQPLLRNRSPEESELLKLKRNYNRSLLNFQAHKKKLNELLNLYHVANEFIVTESQLLKKIDKVFNDETEEFTDAYDVTSNFTQFGNRKLLLSGNTTLQTQINNAIMGSLSNEKFFDISLVDSYLNKDLKNISNKIDSKLNPTSNGAGNNGNNNNTTNL.

A disordered region spans residues 295-318 (IDSKLNPTSNGAGNNGNNNNTTNL). Positions 300 to 318 (NPTSNGAGNNGNNNNTTNL) are enriched in low complexity.

This sequence belongs to the mitochondrion-specific ribosomal protein mS26 family. As to quaternary structure, component of the mitochondrial small ribosomal subunit (mt-SSU). Mature yeast 74S mitochondrial ribosomes consist of a small (37S) and a large (54S) subunit. The 37S small subunit contains a 15S ribosomal RNA (15S mt-rRNA) and 34 different proteins. The 54S large subunit contains a 21S rRNA (21S mt-rRNA) and 46 different proteins.

The protein localises to the mitochondrion. In terms of biological role, component of the mitochondrial ribosome (mitoribosome), a dedicated translation machinery responsible for the synthesis of mitochondrial genome-encoded proteins, including at least some of the essential transmembrane subunits of the mitochondrial respiratory chain. The mitoribosomes are attached to the mitochondrial inner membrane and translation products are cotranslationally integrated into the membrane. This is Small ribosomal subunit protein mS26 (PET123) from Saccharomyces cerevisiae (strain ATCC 204508 / S288c) (Baker's yeast).